Reading from the N-terminus, the 229-residue chain is Cytochrome c oxidase subunit 2 (229 aa).

The Mitochondrial intermembrane portion of the chain corresponds to M1–H26. Residues A27–N48 form a helical membrane-spanning segment. The Mitochondrial matrix segment spans residues S49–E62. A helical transmembrane segment spans residues M63–R82. The Mitochondrial intermembrane portion of the chain corresponds to L83–S229. Cu cation is bound by residues H161, C196, E198, C200, H204, and M207. E198 contributes to the Mg(2+) binding site.

It belongs to the cytochrome c oxidase subunit 2 family. As to quaternary structure, component of the cytochrome c oxidase (complex IV, CIV), a multisubunit enzyme composed of a catalytic core of 3 subunits and several supernumerary subunits. The complex exists as a monomer or a dimer and forms supercomplexes (SCs) in the inner mitochondrial membrane with ubiquinol-cytochrome c oxidoreductase (cytochrome b-c1 complex, complex III, CIII). Cu cation is required as a cofactor.

Its subcellular location is the mitochondrion inner membrane. The catalysed reaction is 4 Fe(II)-[cytochrome c] + O2 + 8 H(+)(in) = 4 Fe(III)-[cytochrome c] + 2 H2O + 4 H(+)(out). Its function is as follows. Component of the cytochrome c oxidase, the last enzyme in the mitochondrial electron transport chain which drives oxidative phosphorylation. The respiratory chain contains 3 multisubunit complexes succinate dehydrogenase (complex II, CII), ubiquinol-cytochrome c oxidoreductase (cytochrome b-c1 complex, complex III, CIII) and cytochrome c oxidase (complex IV, CIV), that cooperate to transfer electrons derived from NADH and succinate to molecular oxygen, creating an electrochemical gradient over the inner membrane that drives transmembrane transport and the ATP synthase. Cytochrome c oxidase is the component of the respiratory chain that catalyzes the reduction of oxygen to water. Electrons originating from reduced cytochrome c in the intermembrane space (IMS) are transferred via the dinuclear copper A center (CU(A)) of subunit 2 and heme A of subunit 1 to the active site in subunit 1, a binuclear center (BNC) formed by heme A3 and copper B (CU(B)). The BNC reduces molecular oxygen to 2 water molecules using 4 electrons from cytochrome c in the IMS and 4 protons from the mitochondrial matrix. This chain is Cytochrome c oxidase subunit 2 (mt:CoII), found in Drosophila affinis (Fruit fly).